The sequence spans 81 residues: Translational regulator CsrA (81 aa).

Positions 59–71 (SQMQHLEQGNFPT) are enriched in polar residues. Residues 59–81 (SQMQHLEQGNFPTSFDDDDFFNR) are disordered.

This sequence belongs to the CsrA/RsmA family. Homodimer; the beta-strands of each monomer intercalate to form a hydrophobic core, while the alpha-helices form wings that extend away from the core.

It is found in the cytoplasm. In terms of biological role, a key translational regulator that binds mRNA to regulate translation initiation and/or mRNA stability. Mediates global changes in gene expression, shifting from rapid growth to stress survival by linking envelope stress, the stringent response and the catabolite repression systems. Usually binds in the 5'-UTR; binding at or near the Shine-Dalgarno sequence prevents ribosome-binding, repressing translation, binding elsewhere in the 5'-UTR can activate translation and/or stabilize the mRNA. Its function is antagonized by small RNA(s). This chain is Translational regulator CsrA, found in Psychrobacter sp. (strain PRwf-1).